Reading from the N-terminus, the 271-residue chain is Phosphatidylinositol transfer protein beta isoform (271 aa).

Lys215 carries the N6-acetyllysine modification. At Ser262 the chain carries Phosphoserine; by PKC.

Belongs to the PtdIns transfer protein family. PI transfer class I subfamily. Constitutive phosphorylation of Ser-262 has no effect on phospholipid transfer activity but is required for Golgi targeting.

The protein resides in the golgi apparatus. It localises to the golgi apparatus membrane. Its subcellular location is the endoplasmic reticulum membrane. It catalyses the reaction a 1,2-diacyl-sn-glycero-3-phosphocholine(in) = a 1,2-diacyl-sn-glycero-3-phosphocholine(out). It carries out the reaction a 1,2-diacyl-sn-glycero-3-phospho-(1D-myo-inositol)(in) = a 1,2-diacyl-sn-glycero-3-phospho-(1D-myo-inositol)(out). The catalysed reaction is an N-(acyl)-sphingosylphosphocholine(in) = an N-(acyl)-sphingosylphosphocholine(out). Functionally, catalyzes the transfer of phosphatidylinositol, phosphatidylcholine and sphingomyelin between membranes. Required for COPI-mediated retrograde transport from the Golgi to the endoplasmic reticulum; phosphatidylinositol and phosphatidylcholine transfer activity is essential for this function. This chain is Phosphatidylinositol transfer protein beta isoform (Pitpnb), found in Mus musculus (Mouse).